The chain runs to 733 residues: Putative cyclic nucleotide-gated ion channel 9 (733 aa).

Over 1-117 (MLDCGKKAVK…DKFLLLCNKL (117 aa)) the chain is Cytoplasmic. Residues 118–138 (FVTSCILAVSVDPLFLYLPFV) traverse the membrane as a helical segment. Residues 139–151 (KDNEKCIGIDRKL) lie on the Extracellular side of the membrane. A helical transmembrane segment spans residues 152 to 172 (AIIATTLRTVIDAFYLFHMAL). The Cytoplasmic portion of the chain corresponds to 173-207 (RFRTAFVAPSSRVFGRGELVIDPAQIAKRYLQQYF). Residues 208 to 228 (IIDFLSVLPLPQIVVWRFLYI) traverse the membrane as a helical segment. Topologically, residues 229–239 (SKGASVLATKR) are extracellular. Residues 240–260 (ALRSIILVQYIPRFIRLYPLS) traverse the membrane as a helical segment. The Cytoplasmic segment spans residues 261–280 (SELKRTAGVFAETAWAGAAY). Residues 281–301 (YLLLYMLASHIVGAIWYLLAL) traverse the membrane as a helical segment. The Extracellular segment spans residues 302–406 (ERYNGCWTKV…GQGLETSTYP (105 aa)). The chain crosses the membrane as a helical span at residues 407–427 (GEVIFSIALAIAGLLLFALLI). Over 428-733 (GNMQTYLQSL…EPDFSADDTS (306 aa)) the chain is Cytoplasmic. A nucleoside 3',5'-cyclic phosphate contacts are provided by residues 513–637 (LFEN…SRQV) and E584. The segment at 629-644 (FRRLHSRQVQHTFRFY) is calmodulin-binding. The IQ domain occupies 649-678 (RTWAAIFIQAAWRRYVKKKKLEQLRKEEEE).

The protein belongs to the cyclic nucleotide-gated cation channel (TC 1.A.1.5) family. Homotetramer or heterotetramer.

It localises to the cell membrane. Its function is as follows. Putative cyclic nucleotide-gated ion channel. This Arabidopsis thaliana (Mouse-ear cress) protein is Putative cyclic nucleotide-gated ion channel 9 (CNGC9).